A 198-amino-acid polypeptide reads, in one-letter code: MLLMMIDNYDSFTYNVVQYLGELGAEVKVIRNDEMTIAQIEALNPERIVVSPGPCTPSEAGVSIEAILHFAGKLPILGVCLGHQSIGQAFGGDVVRARQVMHGKTSPVHHRDLGVFTGLNNPLTVTRYHSLVVKRETLPDCLEVTAWTAHEDGSVDEIMGLRHKTLNIEGVQFHPESILTEQGHELFANFLKQTGGRR.

The 197-residue stretch at 2-198 (LLMMIDNYDS…NFLKQTGGRR (197 aa)) folds into the Glutamine amidotransferase type-1 domain. 53 to 55 (GPC) lines the L-glutamine pocket. Cys-80 functions as the Nucleophile; for GATase activity in the catalytic mechanism. L-glutamine is bound by residues Gln-84 and 130–131 (SL). Residues His-174 and Glu-176 each act as for GATase activity in the active site.

As to quaternary structure, heterotetramer consisting of two non-identical subunits: a beta subunit (TrpG) and a large alpha subunit (TrpE).

The enzyme catalyses chorismate + L-glutamine = anthranilate + pyruvate + L-glutamate + H(+). It participates in amino-acid biosynthesis; L-tryptophan biosynthesis; L-tryptophan from chorismate: step 1/5. In terms of biological role, part of a heterotetrameric complex that catalyzes the two-step biosynthesis of anthranilate, an intermediate in the biosynthesis of L-tryptophan. In the first step, the glutamine-binding beta subunit (TrpG) of anthranilate synthase (AS) provides the glutamine amidotransferase activity which generates ammonia as a substrate that, along with chorismate, is used in the second step, catalyzed by the large alpha subunit of AS (TrpE) to produce anthranilate. In the absence of TrpG, TrpE can synthesize anthranilate directly from chorismate and high concentrations of ammonia. This Pseudomonas putida (Arthrobacter siderocapsulatus) protein is Anthranilate synthase component 2 (trpG).